The sequence spans 441 residues: Dolichyl-diphosphooligosaccharide--protein glycosyltransferase 48 kDa subunit (441 aa).

Residues 1–28 form the signal peptide; it reads MATALSGGFSKNALFILSAALMLQAVLG. Topologically, residues 29 to 410 are lumenal; the sequence is DGKTLVLLDN…TQYERFIPSA (382 aa). A helical membrane pass occupies residues 411–431; the sequence is FPYYASAFSMMAGLFVFSVVF. Residues 432-441 are Cytoplasmic-facing; that stretch reads LHMREKEKSD.

It belongs to the DDOST 48 kDa subunit family. As to quaternary structure, component of the oligosaccharyltransferase (OST) complex.

It localises to the endoplasmic reticulum membrane. It functions in the pathway protein modification; protein glycosylation. Functionally, subunit of the oligosaccharyl transferase (OST) complex that catalyzes the initial transfer of a defined glycan (Glc(3)Man(9)GlcNAc(2) in eukaryotes) from the lipid carrier dolichol-pyrophosphate to an asparagine residue within an Asn-X-Ser/Thr consensus motif in nascent polypeptide chains, the first step in protein N-glycosylation. N-glycosylation occurs cotranslationally and the complex associates with the Sec61 complex at the channel-forming translocon complex that mediates protein translocation across the endoplasmic reticulum (ER). All subunits are required for a maximal enzyme activity. Required for the assembly of both SST3A- and SS3B-containing OST complexes. This chain is Dolichyl-diphosphooligosaccharide--protein glycosyltransferase 48 kDa subunit, found in Danio rerio (Zebrafish).